The following is a 252-amino-acid chain: Phosphate import ATP-binding protein PstB 1 (252 aa).

Residues 6–247 (ISSKDLHLYY…PKEKQTEDYI (242 aa)) enclose the ABC transporter domain. Residue 38–45 (GPSGCGKS) participates in ATP binding.

It belongs to the ABC transporter superfamily. Phosphate importer (TC 3.A.1.7) family. As to quaternary structure, the complex is composed of two ATP-binding proteins (PstB), two transmembrane proteins (PstC and PstA) and a solute-binding protein (PstS).

The protein resides in the cell membrane. The catalysed reaction is phosphate(out) + ATP + H2O = ADP + 2 phosphate(in) + H(+). Its function is as follows. Part of the ABC transporter complex PstSACB involved in phosphate import. Responsible for energy coupling to the transport system. This chain is Phosphate import ATP-binding protein PstB 1, found in Enterococcus faecalis (strain ATCC 700802 / V583).